The sequence spans 601 residues: uncharacterized protein (601 aa).

The span at 24–35 (RKSNVVLKKNKG) shows a compositional bias: basic residues. 2 disordered regions span residues 24-106 (RKSN…LKLD) and 171-219 (YGND…PREE). The span at 54–81 (SQFSSRDNFRTTQTQASSSSEPSDNTNR) shows a compositional bias: polar residues. Over residues 92 to 106 (TPKKEESNAEKLKLD) the composition is skewed to basic and acidic residues. Phosphoserine is present on residues Ser236 and Ser238. A disordered region spans residues 260-283 (RKRKVLSSSSEDDESSSPEDLLKP).

Its subcellular location is the nucleus. This is an uncharacterized protein from Schizosaccharomyces pombe (strain 972 / ATCC 24843) (Fission yeast).